The primary structure comprises 126 residues: Glycine cleavage system H protein (126 aa).

The Lipoyl-binding domain maps to 22–104 (KAYIGITSFA…YEQAWMIVVE (83 aa)). Residue Lys-63 is modified to N6-lipoyllysine.

The protein belongs to the GcvH family. As to quaternary structure, the glycine cleavage system is composed of four proteins: P, T, L and H. Requires (R)-lipoate as cofactor.

Functionally, the glycine cleavage system catalyzes the degradation of glycine. The H protein shuttles the methylamine group of glycine from the P protein to the T protein. Is also involved in protein lipoylation via its role as an octanoyl/lipoyl carrier protein intermediate. This Brevibacillus brevis (strain 47 / JCM 6285 / NBRC 100599) protein is Glycine cleavage system H protein.